A 90-amino-acid polypeptide reads, in one-letter code: uncharacterized protein (90 aa).

The tract at residues 62-90 (RQLKKKQAYKPDPEASFSWSANTSTRGRR) is disordered. The span at 78-90 (FSWSANTSTRGRR) shows a compositional bias: polar residues.

This is an uncharacterized protein from Escherichia coli (strain K12).